The following is a 356-amino-acid chain: Histidinol-phosphate aminotransferase (356 aa).

Lys222 bears the N6-(pyridoxal phosphate)lysine mark.

The protein belongs to the class-II pyridoxal-phosphate-dependent aminotransferase family. Histidinol-phosphate aminotransferase subfamily. In terms of assembly, homodimer. Pyridoxal 5'-phosphate is required as a cofactor.

The catalysed reaction is L-histidinol phosphate + 2-oxoglutarate = 3-(imidazol-4-yl)-2-oxopropyl phosphate + L-glutamate. It participates in amino-acid biosynthesis; L-histidine biosynthesis; L-histidine from 5-phospho-alpha-D-ribose 1-diphosphate: step 7/9. The protein is Histidinol-phosphate aminotransferase of Lactiplantibacillus plantarum (strain ATCC BAA-793 / NCIMB 8826 / WCFS1) (Lactobacillus plantarum).